A 358-amino-acid chain; its full sequence is Neutral protease 2 homolog PADG_00776 (358 aa).

The signal sequence occupies residues 1–19 (MRRVSGILAVAAFTISAFA). Positions 20-185 (GVIQPVAKDA…MNQFVKIAKL (166 aa)) are excised as a propeptide. Intrachain disulfides connect Cys188–Cys259 and Cys266–Cys284. Residue Asn249 is glycosylated (N-linked (GlcNAc...) asparagine). His309 contributes to the Zn(2+) binding site. The active site involves Glu310. Zn(2+)-binding residues include His313 and Asp324.

Belongs to the peptidase M35 family. Zn(2+) is required as a cofactor.

The protein localises to the secreted. It catalyses the reaction Preferential cleavage of bonds with hydrophobic residues in P1'. Also 3-Asn-|-Gln-4 and 8-Gly-|-Ser-9 bonds in insulin B chain.. In terms of biological role, secreted metalloproteinase that allows assimilation of proteinaceous substrates. Shows high activities on basic nuclear substrates such as histone and protamine. The polypeptide is Neutral protease 2 homolog PADG_00776 (Paracoccidioides brasiliensis (strain Pb18)).